The following is a 701-amino-acid chain: Lutropin-choriogonadotropic hormone receptor (701 aa).

Residues 1 to 26 (MGRPSLALRLLLALLLLPPPAPLLWA) form the signal peptide. Topologically, residues 27–365 (LRPAPCPEPC…EDIMGYNFLR (339 aa)) are extracellular. Asn101 is a glycosylation site (N-linked (GlcNAc...) asparagine). LRR repeat units lie at residues 124–149 (LPRL…IFSS), 151–173 (FNFI…AFQG), 174–198 (MNNE…AFNG), 200–222 (TLIS…AFRG), 223–246 (ATGP…GLES), and 250–271 (LIAT…TNLL). N-linked (GlcNAc...) asparagine glycosylation is found at Asn176 and Asn197. 3 N-linked (GlcNAc...) asparagine glycosylation sites follow: Asn293, Asn301, and Asn315. Tyr333 is modified (sulfotyrosine). Residues 366–387 (VLIWLINILAITGNVTVLFVLL) traverse the membrane as a helical segment. Topologically, residues 388 to 397 (TSRYKLTVPR) are cytoplasmic. A helical transmembrane segment spans residues 398–418 (FLMCNLSFADFCMGLYLLLIA). The Extracellular segment spans residues 419-441 (SVDAQTKGQYYNHAIDWQTGSGC). Cys441 and Cys516 are joined by a disulfide. A helical transmembrane segment spans residues 442 to 464 (SAAGFFTVFASELSVYTLTVITL). The Cytoplasmic segment spans residues 465–484 (ERWHTITYAIQLDQKLRLKH). A helical membrane pass occupies residues 485–507 (AIPVMLGGWLFSTLIAVLPLVGV). Over 508–527 (SNYMKVSICLPMDVESTLSQ) the chain is Extracellular. A helical transmembrane segment spans residues 528–551 (VYILTILILNVMAFIIICACYIKI). At 552–572 (YFAVQNPELMATNKDTKIAKK) the chain is on the cytoplasmic side. The chain crosses the membrane as a helical span at residues 573–596 (MAVLIFTDFTCMAPISFFAISAAF). The Extracellular portion of the chain corresponds to 597–607 (KVPLITVTNSK). A helical membrane pass occupies residues 608-629 (VLLVLFYPVNSCANPFLYAIFT). The Cytoplasmic segment spans residues 630–701 (KAFQRDFFLL…VLDKTCYKEC (72 aa)). 2 S-palmitoyl cysteine lipidation sites follow: Cys645 and Cys646.

It belongs to the G-protein coupled receptor 1 family. FSH/LSH/TSH subfamily. Sulfated.

The protein localises to the cell membrane. In terms of biological role, receptor for lutropin-choriogonadotropic hormone. The activity of this receptor is mediated by G proteins which activate adenylate cyclase. The polypeptide is Lutropin-choriogonadotropic hormone receptor (LHCGR) (Bos taurus (Bovine)).